A 184-amino-acid polypeptide reads, in one-letter code: NADH-quinone oxidoreductase subunit B (184 aa).

[4Fe-4S] cluster-binding residues include Cys63, Cys64, Cys128, and Cys158.

The protein belongs to the complex I 20 kDa subunit family. As to quaternary structure, NDH-1 is composed of 14 different subunits. Subunits NuoB, C, D, E, F, and G constitute the peripheral sector of the complex. The cofactor is [4Fe-4S] cluster.

It localises to the cell inner membrane. It carries out the reaction a quinone + NADH + 5 H(+)(in) = a quinol + NAD(+) + 4 H(+)(out). Functionally, NDH-1 shuttles electrons from NADH, via FMN and iron-sulfur (Fe-S) centers, to quinones in the respiratory chain. Couples the redox reaction to proton translocation (for every two electrons transferred, four hydrogen ions are translocated across the cytoplasmic membrane), and thus conserves the redox energy in a proton gradient. The protein is NADH-quinone oxidoreductase subunit B of Xylella fastidiosa (strain 9a5c).